The following is a 353-amino-acid chain: MTIAVGRVTKEENDLFPLIDDWLRRDRFVFVGWSGLLLFPCAYFALGGWFTGTTFVTSWYTHGLASSYLEGCNFLTAAVSTPANSLAHSLLLLWGPEAQGDFTRWSQLGGLWTFLALHGAFALIGFMLRQFELARPVQLRPYNAISFSGPIAVFLSVFLIYPLGQSGWFFSPSFGVAAIFRFILFFQGFHNWTLKPFHMMGVAGVLGAVLLCAIHGATVENTLFEDGDGANTFRAFNPTQAEETYSMVTANRFWSQIFGVAFSNKRWLHFFMLFVPVTGLWMSAIGVVGLALNLRAYDFVSQEIRAAEDPEFETFYTKNILLNEGIRAWMAAQDQPHENLIFPEEVLPRGNAL.

Thr2 carries the N-acetylthreonine modification. Thr2 carries the phosphothreonine modification. The chain crosses the membrane as a helical span at residues 41-61 (CAYFALGGWFTGTTFVTSWYT). His118 contacts chlorophyll a. Residues 125 to 141 (GFMLRQFELARPVQLRP) traverse the membrane as a helical segment. Gln130 and Asn143 together coordinate pheophytin a. The helical transmembrane segment at 153 to 166 (VFLSVFLIYPLGQS) threads the bilayer. His198 is a chlorophyll a binding site. Residues 208–228 (AVLLCAIHGATVENTLFEDGD) traverse the membrane as a helical segment. Residues His215 and Phe262 each contribute to the a plastoquinone site. His215 contributes to the Fe cation binding site. A Fe cation-binding site is contributed by His269. A helical transmembrane segment spans residues 279 to 295 (GLWMSAIGVVGLALNLR).

The protein belongs to the reaction center PufL/M/PsbA/D family. In terms of assembly, PSII is composed of 1 copy each of membrane proteins PsbA, PsbB, PsbC, PsbD, PsbE, PsbF, PsbH, PsbI, PsbJ, PsbK, PsbL, PsbM, PsbT, PsbX, PsbY, PsbZ, Psb30/Ycf12, at least 3 peripheral proteins of the oxygen-evolving complex and a large number of cofactors. It forms dimeric complexes. The D1/D2 heterodimer binds P680, chlorophylls that are the primary electron donor of PSII, and subsequent electron acceptors. It shares a non-heme iron and each subunit binds pheophytin, quinone, additional chlorophylls, carotenoids and lipids. There is also a Cl(-1) ion associated with D1 and D2, which is required for oxygen evolution. The PSII complex binds additional chlorophylls, carotenoids and specific lipids. serves as cofactor. In terms of processing, only phosphorylated in mesophyll cells, phosphorylation increases when cells are grown under high rather than low light regimes (70 vs 900 umol photons/m-2/s).

The protein localises to the plastid. Its subcellular location is the chloroplast thylakoid membrane. The catalysed reaction is 2 a plastoquinone + 4 hnu + 2 H2O = 2 a plastoquinol + O2. Its function is as follows. Photosystem II (PSII) is a light-driven water:plastoquinone oxidoreductase that uses light energy to abstract electrons from H(2)O, generating O(2) and a proton gradient subsequently used for ATP formation. It consists of a core antenna complex that captures photons, and an electron transfer chain that converts photonic excitation into a charge separation. The D1/D2 (PsbA/PsbD) reaction center heterodimer binds P680, the primary electron donor of PSII as well as several subsequent electron acceptors. D2 is needed for assembly of a stable PSII complex. The polypeptide is Photosystem II D2 protein (Zea mays (Maize)).